The following is an 84-amino-acid chain: Putative regulatory protein Dde_2720 (84 aa).

Belongs to the RemA family.

In Oleidesulfovibrio alaskensis (strain ATCC BAA-1058 / DSM 17464 / G20) (Desulfovibrio alaskensis), this protein is Putative regulatory protein Dde_2720.